Reading from the N-terminus, the 380-residue chain is Ankyrin repeat domain-containing protein 63 (380 aa).

ANK repeat units lie at residues alanine 11 to isoleucine 40, glutamine 46 to leucine 79, arginine 83 to alanine 112, alanine 116 to leucine 145, and alanine 153 to alanine 182. Composition is skewed to low complexity over residues alanine 181 to serine 203 and arginine 216 to alanine 226. A disordered region spans residues alanine 181–serine 256. A Phosphoserine modification is found at serine 193. Residue serine 294 is modified to Phosphoserine. The disordered stretch occupies residues proline 309–glutamine 368.

This is Ankyrin repeat domain-containing protein 63 from Homo sapiens (Human).